The sequence spans 29 residues: Alpha-amylase inhibitor 2 (29 aa).

This sequence belongs to the protease inhibitor I6 (cereal trypsin/alpha-amylase inhibitor) family.

Its subcellular location is the secreted. Alpha-amylase inhibitor. The sequence is that of Alpha-amylase inhibitor 2 from Saussurea costus (Costus).